The chain runs to 686 residues: tRNA wybutosine-synthesizing protein 4 (686 aa).

Basic and acidic residues predominate over residues Met-1 to Ala-10. The disordered stretch occupies residues Met-1 to Ala-21. S-adenosyl-L-methionine contacts are provided by residues Arg-59, Gly-89, Asp-114, Asp-161–Leu-162, and Glu-188.

It belongs to the methyltransferase superfamily. LCMT family. In terms of assembly, interacts with RNF144B/IBRDC2.

The enzyme catalyses 7-[(3S)-3-amino-3-carboxypropyl]wyosine(37) in tRNA(Phe) + S-adenosyl-L-methionine = 7-[(3S)-(3-amino-3-methoxycarbonyl)propyl]wyosine(37) in tRNA(Phe) + S-adenosyl-L-homocysteine. It carries out the reaction 7-[(3S)-(3-amino-3-methoxycarbonyl)propyl]wyosine(37) in tRNA(Phe) + S-adenosyl-L-methionine + CO2 = wybutosine(37) in tRNA(Phe) + S-adenosyl-L-homocysteine + 2 H(+). The protein operates within tRNA modification; wybutosine-tRNA(Phe) biosynthesis. Probable S-adenosyl-L-methionine-dependent methyltransferase that acts as a component of the wybutosine biosynthesis pathway. Wybutosine is a hyper modified guanosine with a tricyclic base found at the 3'-position adjacent to the anticodon of eukaryotic phenylalanine tRNA. May methylate the carboxyl group of leucine residues to form alpha-leucine ester residues. This chain is tRNA wybutosine-synthesizing protein 4 (LCMT2), found in Homo sapiens (Human).